A 634-amino-acid chain; its full sequence is tRNA uridine 5-carboxymethylaminomethyl modification enzyme MnmG (634 aa).

13 to 18 (GAGHAG) contributes to the FAD binding site. NAD(+) is bound at residue 273–287 (GPRYCPSIEDKIIKF).

The protein belongs to the MnmG family. In terms of assembly, homodimer. Heterotetramer of two MnmE and two MnmG subunits. It depends on FAD as a cofactor.

Its subcellular location is the cytoplasm. Functionally, NAD-binding protein involved in the addition of a carboxymethylaminomethyl (cmnm) group at the wobble position (U34) of certain tRNAs, forming tRNA-cmnm(5)s(2)U34. The sequence is that of tRNA uridine 5-carboxymethylaminomethyl modification enzyme MnmG from Buchnera aphidicola subsp. Cinara cedri (strain Cc).